A 404-amino-acid chain; its full sequence is Queuine tRNA-ribosyltransferase catalytic subunit (404 aa).

Aspartate 98 functions as the Proton acceptor in the catalytic mechanism. Substrate-binding positions include 98–102 (DSGGF), aspartate 152, glutamine 195, and glycine 222. Residues 253-259 (GVGYAED) form an RNA binding region. Aspartate 272 serves as the catalytic Nucleophile. Residues 277–281 (TRTAR) form an RNA binding; important for wobble base 34 recognition region. Positions 310, 312, 315, and 347 each coordinate Zn(2+).

This sequence belongs to the queuine tRNA-ribosyltransferase family. As to quaternary structure, heterodimer of a catalytic subunit and an accessory subunit. The cofactor is Zn(2+).

It is found in the cytoplasm. The protein resides in the nucleus. It catalyses the reaction guanosine(34) in tRNA + queuine = queuosine(34) in tRNA + guanine. Catalytic subunit of the queuine tRNA-ribosyltransferase (TGT) that catalyzes the base-exchange of a guanine (G) residue with queuine (Q) at position 34 (anticodon wobble position) in tRNAs with GU(N) anticodons (tRNA-Asp, -Asn, -His and -Tyr), resulting in the hypermodified nucleoside queuosine (7-(((4,5-cis-dihydroxy-2-cyclopenten-1-yl)amino)methyl)-7-deazaguanosine). Catalysis occurs through a double-displacement mechanism. The nucleophile active site attacks the C1' of nucleotide 34 to detach the guanine base from the RNA, forming a covalent enzyme-RNA intermediate. The proton acceptor active site deprotonates the incoming queuine, allowing a nucleophilic attack on the C1' of the ribose to form the product. The sequence is that of Queuine tRNA-ribosyltransferase catalytic subunit from Schizosaccharomyces pombe (strain 972 / ATCC 24843) (Fission yeast).